The following is a 212-amino-acid chain: Glycerol-3-phosphate acyltransferase (212 aa).

5 helical membrane-spanning segments follow: residues 5–25 (ALGM…ILVC), 53–73 (VAAA…VWLA), 80–100 (PLYL…PVFF), 112–132 (FGAI…TWLL), and 138–158 (GYSS…VWWF).

This sequence belongs to the PlsY family. Probably interacts with PlsX.

The protein resides in the cell inner membrane. The enzyme catalyses an acyl phosphate + sn-glycerol 3-phosphate = a 1-acyl-sn-glycero-3-phosphate + phosphate. It functions in the pathway lipid metabolism; phospholipid metabolism. In terms of biological role, catalyzes the transfer of an acyl group from acyl-phosphate (acyl-PO(4)) to glycerol-3-phosphate (G3P) to form lysophosphatidic acid (LPA). This enzyme utilizes acyl-phosphate as fatty acyl donor, but not acyl-CoA or acyl-ACP. The chain is Glycerol-3-phosphate acyltransferase from Serratia proteamaculans (strain 568).